The following is a 428-amino-acid chain: GTPase Obg (428 aa).

The 158-residue stretch at 1 to 158 (MFVDQTKIDV…RTLRLELKVL (158 aa)) folds into the Obg domain. The 170-residue stretch at 159–328 (ADVGLVGFPS…LMGKTADLVE (170 aa)) folds into the OBG-type G domain. GTP contacts are provided by residues 165–172 (GFPSVGKS), 190–194 (FTTLT), 212–215 (DLPG), 282–285 (TQMD), and 309–311 (SSV). Mg(2+)-binding residues include serine 172 and threonine 192. The OCT domain occupies 350 to 428 (YKKPEDEGFK…IADFTFEFVD (79 aa)).

Belongs to the TRAFAC class OBG-HflX-like GTPase superfamily. OBG GTPase family. Monomer. Mg(2+) serves as cofactor.

Its subcellular location is the cytoplasm. An essential GTPase which binds GTP, GDP and possibly (p)ppGpp with moderate affinity, with high nucleotide exchange rates and a fairly low GTP hydrolysis rate. Plays a role in control of the cell cycle, stress response, ribosome biogenesis and in those bacteria that undergo differentiation, in morphogenesis control. The sequence is that of GTPase Obg from Lactobacillus johnsonii (strain CNCM I-12250 / La1 / NCC 533).